The chain runs to 167 residues: Claudin domain-containing protein 2 (167 aa).

The next 4 membrane-spanning stretches (helical) occupy residues 13 to 32, 61 to 81, 96 to 116, and 130 to 150; these read LLNLLSSILTVLSTTTNYWT, VSAACMVLAATFSIVALGIGI, TIVLLFLSGLLLLIALAVYTS, and YFFGWLALPFLFIAGFCFLLA.

Belongs to the PMP-22/EMP/MP20 family.

It localises to the membrane. The chain is Claudin domain-containing protein 2 (Cldnd2) from Mus musculus (Mouse).